The primary structure comprises 260 residues: Global transcriptional regulator CodY (260 aa).

Positions 1–159 (MPNLLEKTRK…SSTVVGIQLL (159 aa)) are GAF domain. Positions 207 to 226 (ASVIADRIGITRSVIVNALR) form a DNA-binding region, H-T-H motif.

It belongs to the CodY family.

The protein resides in the cytoplasm. In terms of biological role, DNA-binding global transcriptional regulator which is involved in the adaptive response to starvation and acts by directly or indirectly controlling the expression of numerous genes in response to nutrient availability. During rapid exponential growth, CodY is highly active and represses genes whose products allow adaptation to nutrient depletion. The chain is Global transcriptional regulator CodY from Streptococcus pyogenes serotype M4 (strain MGAS10750).